Here is a 233-residue protein sequence, read N- to C-terminus: Chromosome partition protein MukE (233 aa).

The segment at 207 to 233 (SLSLHDESDDADVTMGNAADSVEDEQE) is disordered.

The protein belongs to the MukE family. Interacts, and probably forms a ternary complex, with MukF and MukB. The complex formation is stimulated by calcium or magnesium.

It localises to the cytoplasm. The protein localises to the nucleoid. Its function is as follows. Involved in chromosome condensation, segregation and cell cycle progression. May participate in facilitating chromosome segregation by condensation DNA from both sides of a centrally located replisome during cell division. Probably acts via its interaction with MukB and MukF. The sequence is that of Chromosome partition protein MukE from Yersinia pestis.